The chain runs to 465 residues: 3-isopropylmalate dehydratase large subunit (465 aa).

Residues Cys-347, Cys-407, and Cys-410 each contribute to the [4Fe-4S] cluster site.

It belongs to the aconitase/IPM isomerase family. LeuC type 1 subfamily. As to quaternary structure, heterodimer of LeuC and LeuD. [4Fe-4S] cluster is required as a cofactor.

The enzyme catalyses (2R,3S)-3-isopropylmalate = (2S)-2-isopropylmalate. The protein operates within amino-acid biosynthesis; L-leucine biosynthesis; L-leucine from 3-methyl-2-oxobutanoate: step 2/4. Catalyzes the isomerization between 2-isopropylmalate and 3-isopropylmalate, via the formation of 2-isopropylmaleate. This is 3-isopropylmalate dehydratase large subunit from Tolumonas auensis (strain DSM 9187 / NBRC 110442 / TA 4).